The sequence spans 72 residues: Exodeoxyribonuclease 7 small subunit (72 aa).

This sequence belongs to the XseB family. In terms of assembly, heterooligomer composed of large and small subunits.

Its subcellular location is the cytoplasm. It carries out the reaction Exonucleolytic cleavage in either 5'- to 3'- or 3'- to 5'-direction to yield nucleoside 5'-phosphates.. In terms of biological role, bidirectionally degrades single-stranded DNA into large acid-insoluble oligonucleotides, which are then degraded further into small acid-soluble oligonucleotides. The chain is Exodeoxyribonuclease 7 small subunit from Chlamydia muridarum (strain MoPn / Nigg).